Consider the following 833-residue polypeptide: Interleukin enhancer-binding factor 3 homolog (833 aa).

The DZF domain maps to 11–379 (RIFVNDDRHV…PMKRPIEEES (369 aa)). Disordered stretches follow at residues 65–86 (VNAL…GEQA) and 339–403 (DPLP…KAEP). Threonine 70 is modified (phosphothreonine). Residues 373–385 (RPIEEESTDEKNP) show a composition bias toward basic and acidic residues. DRBM domains lie at 402–471 (EPAQ…DMGL) and 527–593 (HGKN…KLFP). 3 disordered regions span residues 597 to 651 (NSEV…FNQG), 702 to 762 (QSDS…GGGA), and 775 to 833 (AYPS…YQYR). Residues 629–639 (GRGRGRGRGRG) show a composition bias toward basic residues. Residues 640-651 (RGFNNGGGFNQG) show a composition bias toward gly residues. Polar residues predominate over residues 775 to 818 (AYPSQVTGGQEYNYEGYSNQSNYNSQGGANQNFGGNSAPYNSGQ).

Its subcellular location is the nucleus. The protein resides in the nucleolus. It localises to the cytoplasm. In terms of biological role, RNA-binding protein that plays an essential role in the biogenesis of circular RNAs (circRNAs) which are produced by back-splicing circularization of pre-mRNAs. Within the nucleus, promotes circRNAs processing by stabilizing the regulatory elements residing in the flanking introns of the circularized exons. Plays thereby a role in the back-splicing of a subset of circRNAs. As a consequence, participates in a wide range of transcriptional and post-transcriptional processes. Binds to poly-U elements and AU-rich elements (AREs) in the 3'-UTR of target mRNAs. Upon viral infection, ILF3 accumulates in the cytoplasm and participates in the innate antiviral response. Mechanistically, ILF3 becomes phosphorylated and activated by the double-stranded RNA-activated protein kinase/PKR which releases ILF3 from cellular mature circRNAs. In turn, unbound ILF3 molecules are able to interact with and thus inhibit viral mRNAs. The protein is Interleukin enhancer-binding factor 3 homolog (ilf3) of Danio rerio (Zebrafish).